Here is a 388-residue protein sequence, read N- to C-terminus: Zinc finger protein ubi-d4 A (388 aa).

The interval 60–190 (GPGSAPGQLY…AKGKGIGSAR (131 aa)) is disordered. 2 stretches are compositionally biased toward basic and acidic residues: residues 97–107 (PDPEQMLKKEG) and 123–137 (DPIEKRIMPDSRDDD). A compositionally biased stretch (acidic residues) spans 156–170 (PDDFLDDLDDEDYEE). A C2H2-type zinc finger spans residues 205–228 (YACDICGKRYKNRPGLSYHYAHSH). Residues 233 to 264 (EGAGAEDKEDSQPPTPIMHRPEEQKSKKGPDG) form a disordered region. Residues 251–262 (HRPEEQKSKKGP) show a composition bias toward basic and acidic residues. 2 PHD-type zinc fingers span residues 269 to 329 (NNYC…CKCC) and 326 to 376 (CKCC…CLDL).

The protein belongs to the requiem/DPF family.

Its subcellular location is the cytoplasm. It localises to the nucleus. Its function is as follows. May be a transcription factor required for the apoptosis response following survival factor withdrawal from myeloid cells. Might also have a role in the development and maturation of lymphoid cells. In Xenopus laevis (African clawed frog), this protein is Zinc finger protein ubi-d4 A (req-a).